The following is an 89-amino-acid chain: U1-hexatoxin-Iw1e (89 aa).

An N-terminal signal peptide occupies residues 1 to 18 (MLKFVVLIFVVIMASTFA). 5 disulfides stabilise this stretch: C21-C32, C26-C40, C31-C66, C50-C74, and C68-C81. A propeptide spanning residues 87–89 (RSE) is cleaved from the precursor.

This sequence belongs to the MIT-like AcTx family. Expressed by the venom gland.

The protein resides in the secreted. The polypeptide is U1-hexatoxin-Iw1e (Illawarra wisharti (Illawarra funnel-web spider)).